Reading from the N-terminus, the 172-residue chain is Protein-export protein SecB (172 aa).

Belongs to the SecB family. In terms of assembly, homotetramer, a dimer of dimers. One homotetramer interacts with 1 SecA dimer.

Its subcellular location is the cytoplasm. Its function is as follows. One of the proteins required for the normal export of preproteins out of the cell cytoplasm. It is a molecular chaperone that binds to a subset of precursor proteins, maintaining them in a translocation-competent state. It also specifically binds to its receptor SecA. This Ralstonia pickettii (strain 12J) protein is Protein-export protein SecB.